The following is an 876-amino-acid chain: Alanine--tRNA ligase (876 aa).

Zn(2+)-binding residues include histidine 565, histidine 569, cysteine 667, and histidine 671.

This sequence belongs to the class-II aminoacyl-tRNA synthetase family. It depends on Zn(2+) as a cofactor.

Its subcellular location is the cytoplasm. It carries out the reaction tRNA(Ala) + L-alanine + ATP = L-alanyl-tRNA(Ala) + AMP + diphosphate. In terms of biological role, catalyzes the attachment of alanine to tRNA(Ala) in a two-step reaction: alanine is first activated by ATP to form Ala-AMP and then transferred to the acceptor end of tRNA(Ala). Also edits incorrectly charged Ser-tRNA(Ala) and Gly-tRNA(Ala) via its editing domain. This is Alanine--tRNA ligase from Staphylococcus aureus (strain USA300).